The sequence spans 154 residues: CASP-like protein 5B2 (154 aa).

Residues 1–10 (MKKLLGGPGT) are Cytoplasmic-facing. Residues 11–31 (VCGLLLRIGQCASAAASIGVM) traverse the membrane as a helical segment. Residues 32–42 (VSAKEFSVHTA) are Extracellular-facing. The chain crosses the membrane as a helical span at residues 43-63 (FCYLIASMGLQLLWSFGLACL). The Cytoplasmic portion of the chain corresponds to 64 to 77 (DVYALRGKKDLQNP). Residues 78 to 98 (ILVSLFVVGDWVTAMLSLAAA) traverse the membrane as a helical segment. Topologically, residues 99-129 (CSSAGVVVLYEKDIKYCNTQSQYPCLRYEVA) are extracellular. A helical membrane pass occupies residues 130–150 (VALSFVTWIQIAVSSHVTFWI). The Cytoplasmic portion of the chain corresponds to 151 to 154 (LASV).

The protein belongs to the Casparian strip membrane proteins (CASP) family. As to quaternary structure, homodimer and heterodimers. In terms of tissue distribution, expressed in the stele of the root.

It is found in the cell membrane. The polypeptide is CASP-like protein 5B2 (Arabidopsis thaliana (Mouse-ear cress)).